Consider the following 810-residue polypeptide: RING finger protein unkempt homolog (810 aa).

The segment at 1 to 24 (MSKGPGPGGSAASSAPPAATAQVL) is disordered. The span at 10–19 (SAASSAPPAA) shows a compositional bias: low complexity. 5 consecutive C3H1-type zinc fingers follow at residues 84–113 (YSPDVYCTKYDEATGLCPEGDECPFLHRTT), 124–154 (YYKTGICIHETDSKGNCTKNGLHCAFAHGPH), 215–241 (NYKTEPCKKPPRLCRQGYACPYYHNSK), 251–285 (KYRSSPCPNVKHGDEWGDPGKCENGDACQYCHTRT), and 293–321 (IYKSTKCNDMQQSGSCPRGPFCAFAHVEQ). Residues 239-265 (NSKDRRRSPRKHKYRSSPCPNVKHGDE) are disordered. Ser-240 is modified (phosphoserine). Positions 241–253 (KDRRRSPRKHKYR) are enriched in basic residues. The tract at residues 324–343 (LSDDLQPSSAVSSPTQPGPV) is disordered. Residues 328–338 (LQPSSAVSSPT) are compositionally biased toward polar residues. Phosphoserine occurs at positions 374, 378, 385, and 631. Residues 643 to 723 (GAAELARLRQ…QEELERLHAG (81 aa)) are a coiled coil. The RING-type; degenerate zinc-finger motif lies at 766–801 (SVKCLKCQEQKRAVLPCQHAALCELCAEGSECPICQ).

Belongs to the unkempt family.

The protein localises to the cytoplasm. Functionally, sequence-specific RNA-binding protein which plays an important role in the establishment and maintenance of the early morphology of cortical neurons during embryonic development. Acts as a translation repressor and controls a translationally regulated cell morphology program to ensure proper structuring of the nervous system. Translational control depends on recognition of its binding element within target mRNAs which consists of a mandatory UAG trimer upstream of a U/A-rich motif. Associated with polysomes. This chain is RING finger protein unkempt homolog (UNK), found in Homo sapiens (Human).